Reading from the N-terminus, the 240-residue chain is Adenosylcobinamide-GDP ribazoletransferase (240 aa).

5 helical membrane-spanning segments follow: residues 31–51 (LLYY…ASHL), 57–77 (APLH…ALHL), 109–129 (IAVV…WVLV), 133–153 (VGAQ…GLFL), and 185–205 (LFCL…FAWL).

It belongs to the CobS family. Requires Mg(2+) as cofactor.

Its subcellular location is the cell inner membrane. It catalyses the reaction alpha-ribazole + adenosylcob(III)inamide-GDP = adenosylcob(III)alamin + GMP + H(+). The catalysed reaction is alpha-ribazole 5'-phosphate + adenosylcob(III)inamide-GDP = adenosylcob(III)alamin 5'-phosphate + GMP + H(+). It participates in cofactor biosynthesis; adenosylcobalamin biosynthesis; adenosylcobalamin from cob(II)yrinate a,c-diamide: step 7/7. Its function is as follows. Joins adenosylcobinamide-GDP and alpha-ribazole to generate adenosylcobalamin (Ado-cobalamin). Also synthesizes adenosylcobalamin 5'-phosphate from adenosylcobinamide-GDP and alpha-ribazole 5'-phosphate. This Pseudomonas putida (strain GB-1) protein is Adenosylcobinamide-GDP ribazoletransferase.